Consider the following 1181-residue polypeptide: DNA-directed RNA polymerase subunit beta' (1181 aa).

4 residues coordinate Zn(2+): cysteine 68, cysteine 70, cysteine 83, and cysteine 86. Residues aspartate 457, aspartate 459, and aspartate 461 each contribute to the Mg(2+) site. The Zn(2+) site is built by cysteine 802, cysteine 876, cysteine 883, and cysteine 886.

This sequence belongs to the RNA polymerase beta' chain family. As to quaternary structure, the RNAP catalytic core consists of 2 alpha, 1 beta, 1 beta' and 1 omega subunit. When a sigma factor is associated with the core the holoenzyme is formed, which can initiate transcription. Requires Mg(2+) as cofactor. Zn(2+) is required as a cofactor.

It carries out the reaction RNA(n) + a ribonucleoside 5'-triphosphate = RNA(n+1) + diphosphate. Its function is as follows. DNA-dependent RNA polymerase catalyzes the transcription of DNA into RNA using the four ribonucleoside triphosphates as substrates. This is DNA-directed RNA polymerase subunit beta' from Syntrophomonas wolfei subsp. wolfei (strain DSM 2245B / Goettingen).